Reading from the N-terminus, the 224-residue chain is Germin-like protein 8-10 (224 aa).

Residues 1 to 22 form the signal peptide; the sequence is MASPSICLLAALLALVSWQAIA. Cys-32 and Cys-47 form a disulfide bridge. The region spanning 62–212 is the Cupin type-1 domain; it reads AMLDTPRKTN…AFQVEKGTID (151 aa). Residue Asn-76 is glycosylated (N-linked (GlcNAc...) asparagine). The Mn(2+) site is built by His-109, His-111, and Glu-116. Residue Asn-135 is glycosylated (N-linked (GlcNAc...) asparagine). His-157 provides a ligand contact to Mn(2+).

This sequence belongs to the germin family. As to quaternary structure, oligomer (believed to be a pentamer but probably hexamer).

It localises to the secreted. The protein resides in the extracellular space. It is found in the apoplast. Its function is as follows. Plays a role in broad-spectrum disease resistance. Probably has no oxalate oxidase activity even if the active site is conserved. This Oryza sativa subsp. japonica (Rice) protein is Germin-like protein 8-10 (GLP2).